A 362-amino-acid chain; its full sequence is Phospho-N-acetylmuramoyl-pentapeptide-transferase (362 aa).

10 helical membrane-spanning segments follow: residues 21 to 41 (YITF…FLLG), 75 to 95 (TMGG…WADL), 100 to 120 (VWAV…DDFL), 136 to 156 (LVVQ…LMPG), 170 to 190 (LMIP…MGAS), 201 to 221 (GLAI…AYLV), 225 to 245 (IFSH…AVFC), 247 to 267 (ALIG…AVFM), 290 to 310 (IVLA…IVQV), and 339 to 359 (TVVI…LATL).

This sequence belongs to the glycosyltransferase 4 family. MraY subfamily. Mg(2+) serves as cofactor.

It is found in the cell inner membrane. It catalyses the reaction UDP-N-acetyl-alpha-D-muramoyl-L-alanyl-gamma-D-glutamyl-meso-2,6-diaminopimeloyl-D-alanyl-D-alanine + di-trans,octa-cis-undecaprenyl phosphate = di-trans,octa-cis-undecaprenyl diphospho-N-acetyl-alpha-D-muramoyl-L-alanyl-D-glutamyl-meso-2,6-diaminopimeloyl-D-alanyl-D-alanine + UMP. The protein operates within cell wall biogenesis; peptidoglycan biosynthesis. Catalyzes the initial step of the lipid cycle reactions in the biosynthesis of the cell wall peptidoglycan: transfers peptidoglycan precursor phospho-MurNAc-pentapeptide from UDP-MurNAc-pentapeptide onto the lipid carrier undecaprenyl phosphate, yielding undecaprenyl-pyrophosphoryl-MurNAc-pentapeptide, known as lipid I. The polypeptide is Phospho-N-acetylmuramoyl-pentapeptide-transferase (Acidiphilium cryptum (strain JF-5)).